A 416-amino-acid chain; its full sequence is MKVVILGAGVIGVTSAWYLARAGHEVVVVDRQDGPALETSFANAGEISPGYASPWAAPGIPAKALRWLFMRHAPLIVRPGFDPAMVRWLVAMLGNCTARAYRVNKGRMVRLAEFSRDRLIELRQETGIRYDERSQGTLQLFRREKDLAGVAKDIEVLKADGVPFELLDAAGCIAAEPGLANSASPIAGGLRLPNDETGDCFKFTNALAELAKAEGVRFVLGRRIDAIVASGNRIAHVRTDRGDISGDAYLVALGSHSPLLLSPLGIRLPVYPVKGYSITVPIVDPARAPVSTLLDESFKVAITRLGDRIRVGGMAEISGYSNDLPPARRATLDHCVGSLFPDAGDLSQASFWTGLRPMTPDGTPVIGATGYRNLFLNTGHGTLGWTMACGSGHVIADIIGGKRPAIETGDLAIDRY.

Residue 3 to 17 (VVILGAGVIGVTSAW) coordinates FAD.

This sequence belongs to the DadA oxidoreductase family. The cofactor is FAD.

It catalyses the reaction a D-alpha-amino acid + A + H2O = a 2-oxocarboxylate + AH2 + NH4(+). It functions in the pathway amino-acid degradation; D-alanine degradation; NH(3) and pyruvate from D-alanine: step 1/1. Its function is as follows. Oxidative deamination of D-amino acids. This is D-amino acid dehydrogenase from Rhizorhabdus wittichii (strain DSM 6014 / CCUG 31198 / JCM 15750 / NBRC 105917 / EY 4224 / RW1) (Sphingomonas wittichii).